A 114-amino-acid polypeptide reads, in one-letter code: MAEKIVTGDEVIVIRGKDRGARGRVRQNLPREDRVIVEGVNIVKKHQRAIPGVRQAGIIEMEAPIHVSKVMLICPHCGKPTRVGFRFTETGEKVRYCKKCQQVIEKPALHRRTK.

It belongs to the universal ribosomal protein uL24 family. As to quaternary structure, part of the 50S ribosomal subunit.

Its function is as follows. One of two assembly initiator proteins, it binds directly to the 5'-end of the 23S rRNA, where it nucleates assembly of the 50S subunit. One of the proteins that surrounds the polypeptide exit tunnel on the outside of the subunit. This Thermomicrobium roseum (strain ATCC 27502 / DSM 5159 / P-2) protein is Large ribosomal subunit protein uL24.